We begin with the raw amino-acid sequence, 177 residues long: Large ribosomal subunit protein uL10 (177 aa).

This sequence belongs to the universal ribosomal protein uL10 family. Part of the ribosomal stalk of the 50S ribosomal subunit. The N-terminus interacts with L11 and the large rRNA to form the base of the stalk. The C-terminus forms an elongated spine to which L12 dimers bind in a sequential fashion forming a multimeric L10(L12)X complex.

Forms part of the ribosomal stalk, playing a central role in the interaction of the ribosome with GTP-bound translation factors. The chain is Large ribosomal subunit protein uL10 from Xanthomonas axonopodis pv. citri (strain 306).